Reading from the N-terminus, the 339-residue chain is MIAKINQLLEEVGALKAANAEELEVLRIKYLSKKGAINDLMADFRNVAAEQKKEVGMKLNELKTKAQEKINALKEQFDNQDNGQDDLDLTRSAYPVELGTRHPLSIVRNEIIDIFARLGFNIAEGPEIEDDWHVFSALNFAEDHPARDMQDTFFIESHPDVLLRTHTSSVQSRVMEVSQPPIRIICPGRVYRNEAISYRAHCFFHQVEALYVDRNVSFTDLKQVLLLFAKEMFGADTKIRLRPSYFPFTEPSAEMDISCNICGGKGCPFCKHTGWVEILGCGMVDPNVLDANGIDSKVYSGYALGMGIERITNLKYQVKDLRMFSENDTRFLKEFEAAY.

Residue E250 coordinates Mg(2+).

Belongs to the class-II aminoacyl-tRNA synthetase family. Phe-tRNA synthetase alpha subunit type 1 subfamily. In terms of assembly, tetramer of two alpha and two beta subunits. Mg(2+) serves as cofactor.

The protein resides in the cytoplasm. The enzyme catalyses tRNA(Phe) + L-phenylalanine + ATP = L-phenylalanyl-tRNA(Phe) + AMP + diphosphate + H(+). The polypeptide is Phenylalanine--tRNA ligase alpha subunit (Bacteroides fragilis (strain ATCC 25285 / DSM 2151 / CCUG 4856 / JCM 11019 / LMG 10263 / NCTC 9343 / Onslow / VPI 2553 / EN-2)).